A 778-amino-acid polypeptide reads, in one-letter code: Endonuclease MutS2 (778 aa).

328 to 335 (GPNTGGKT) provides a ligand contact to ATP. Residues 702–777 (LDLRGKRYEE…GSGATIVTFK (76 aa)) enclose the Smr domain.

Belongs to the DNA mismatch repair MutS family. MutS2 subfamily. As to quaternary structure, homodimer. Binds to stalled ribosomes, contacting rRNA.

In terms of biological role, endonuclease that is involved in the suppression of homologous recombination and thus may have a key role in the control of bacterial genetic diversity. Its function is as follows. Acts as a ribosome collision sensor, splitting the ribosome into its 2 subunits. Detects stalled/collided 70S ribosomes which it binds and splits by an ATP-hydrolysis driven conformational change. Acts upstream of the ribosome quality control system (RQC), a ribosome-associated complex that mediates the extraction of incompletely synthesized nascent chains from stalled ribosomes and their subsequent degradation. Probably generates substrates for RQC. In Streptococcus pneumoniae (strain ATCC 700669 / Spain 23F-1), this protein is Endonuclease MutS2.